The sequence spans 301 residues: Homoserine kinase (301 aa).

89 to 99 contributes to the ATP binding site; it reads KPGSGLGSSSA.

The protein belongs to the GHMP kinase family. Homoserine kinase subfamily.

The protein localises to the cytoplasm. The enzyme catalyses L-homoserine + ATP = O-phospho-L-homoserine + ADP + H(+). It functions in the pathway amino-acid biosynthesis; L-threonine biosynthesis; L-threonine from L-aspartate: step 4/5. Functionally, catalyzes the ATP-dependent phosphorylation of L-homoserine to L-homoserine phosphate. This Methanococcus maripaludis (strain DSM 14266 / JCM 13030 / NBRC 101832 / S2 / LL) protein is Homoserine kinase.